Reading from the N-terminus, the 435-residue chain is Eukaryotic translation initiation factor 3 subunit E (435 aa).

The PCI domain occupies 219-392 (FFNHAKGRDL…GHVVMGTQPL (174 aa)).

It belongs to the eIF-3 subunit E family. Component of the eukaryotic translation initiation factor 3 (eIF-3) complex.

The protein localises to the cytoplasm. Component of the eukaryotic translation initiation factor 3 (eIF-3) complex, which is involved in protein synthesis of a specialized repertoire of mRNAs and, together with other initiation factors, stimulates binding of mRNA and methionyl-tRNAi to the 40S ribosome. The eIF-3 complex specifically targets and initiates translation of a subset of mRNAs involved in cell proliferation. This chain is Eukaryotic translation initiation factor 3 subunit E (eIF3-S6), found in Culex quinquefasciatus (Southern house mosquito).